A 311-amino-acid chain; its full sequence is GTP cyclohydrolase MptA (311 aa).

This sequence belongs to the GTP cyclohydrolase IV family. As to quaternary structure, homodimer. Requires Fe(2+) as cofactor.

It carries out the reaction GTP + H2O = 7,8-dihydroneopterin 2',3'-cyclic phosphate + formate + diphosphate + H(+). It functions in the pathway cofactor biosynthesis; 5,6,7,8-tetrahydromethanopterin biosynthesis. Functionally, converts GTP to 7,8-dihydro-D-neopterin 2',3'-cyclic phosphate, the first intermediate in the biosynthesis of coenzyme methanopterin. In Methanobrevibacter smithii (strain ATCC 35061 / DSM 861 / OCM 144 / PS), this protein is GTP cyclohydrolase MptA.